The sequence spans 149 residues: UPF0179 protein Mbar_A0292 (149 aa).

It belongs to the UPF0179 family.

The protein is UPF0179 protein Mbar_A0292 of Methanosarcina barkeri (strain Fusaro / DSM 804).